The primary structure comprises 253 residues: FGFR1 oncogene partner 2 (253 aa).

Residues 5–104 adopt a coiled-coil conformation; it reads IEKALADAKA…SALELIMSKY (100 aa). Phosphoserine is present on serine 141. Positions 160–223 form a coiled coil; the sequence is LERRHLEANQ…LREILQITRE (64 aa). The tract at residues 231 to 253 is disordered; sequence DDASESTSLSALVTNSDLSLRKS. Residues 235-253 show a composition bias toward polar residues; the sequence is ESTSLSALVTNSDLSLRKS.

It belongs to the SIKE family. In terms of tissue distribution, expressed in bone marrow, spleen and thymus.

It localises to the cytoplasm. In terms of biological role, may be involved in wound healing pathway. The protein is FGFR1 oncogene partner 2 (FGFR1OP2) of Homo sapiens (Human).